We begin with the raw amino-acid sequence, 308 residues long: GATA transcription factor 9 (308 aa).

The interval 34–57 (DDGLNTLPDSSTLSTGTLTDSSNS) is disordered. The span at 39–57 (TLPDSSTLSTGTLTDSSNS) shows a compositional bias: low complexity. Positions 142 to 149 (KARSKRSR) match the Nuclear localization signal motif. Residues 193–247 (SGGGRRCLHCATEKTPQWRTGPMGPKTLCNACGVRYKSGRLVPEYRPASSPTFVM) form a GATA-type zinc finger.

It belongs to the type IV zinc-finger family. Class A subfamily.

It localises to the nucleus. Transcriptional activator that specifically binds 5'-GATA-3' or 5'-GAT-3' motifs within gene promoters. May be involved in the regulation of some light-responsive genes. The sequence is that of GATA transcription factor 9 (GATA9) from Arabidopsis thaliana (Mouse-ear cress).